Consider the following 341-residue polypeptide: HTH-type transcriptional repressor PurR (341 aa).

An HTH lacI-type domain is found at 2-56 (ATIKDVAKRANVSTTTVSHVINKTRFVSEETRNAVWAAIKELHYSPSAVARSLKV). The segment at residues 4–23 (IKDVAKRANVSTTTVSHVIN) is a DNA-binding region (H-T-H motif). Residues 48–56 (SAVARSLKV) mediate DNA binding. Tyrosine 73, arginine 190, threonine 192, phenylalanine 221, and aspartate 275 together coordinate hypoxanthine.

In terms of assembly, homodimer.

It participates in purine metabolism; purine nucleotide biosynthesis [regulation]. Functionally, is the main repressor of the genes involved in the de novo synthesis of purine nucleotides, regulating purB, purC, purEK, purF, purHD, purL, purMN and guaBA expression. PurR is allosterically activated to bind its cognate DNA by binding the purine corepressors, hypoxanthine or guanine, thereby effecting transcription repression. This is HTH-type transcriptional repressor PurR from Escherichia coli O139:H28 (strain E24377A / ETEC).